Reading from the N-terminus, the 369-residue chain is Actin-related protein T3 (369 aa).

This sequence belongs to the actin family. As to quaternary structure, interacts with PFN3. In terms of tissue distribution, testis specific (at protein level). Expressed specifically in haploid germ cells.

The protein localises to the cytoplasm. The protein resides in the cytoskeleton. It is found in the nucleus. In Mus musculus (Mouse), this protein is Actin-related protein T3 (Actrt3).